The primary structure comprises 279 residues: UTP--glucose-1-phosphate uridylyltransferase (279 aa).

The protein belongs to the UDPGP type 2 family.

The catalysed reaction is alpha-D-glucose 1-phosphate + UTP + H(+) = UDP-alpha-D-glucose + diphosphate. Its function is as follows. May play a role in stationary phase survival. This is UTP--glucose-1-phosphate uridylyltransferase (galU) from Pseudomonas aeruginosa (strain ATCC 15692 / DSM 22644 / CIP 104116 / JCM 14847 / LMG 12228 / 1C / PRS 101 / PAO1).